A 267-amino-acid chain; its full sequence is D-aminoacyl-tRNA deacylase (267 aa).

The protein belongs to the DtdA deacylase family. In terms of assembly, monomer. Zn(2+) is required as a cofactor.

The enzyme catalyses a D-aminoacyl-tRNA + H2O = a tRNA + a D-alpha-amino acid + H(+). It catalyses the reaction glycyl-tRNA(Ala) + H2O = tRNA(Ala) + glycine + H(+). Functionally, D-aminoacyl-tRNA deacylase with broad substrate specificity. By recycling D-aminoacyl-tRNA to D-amino acids and free tRNA molecules, this enzyme counteracts the toxicity associated with the formation of D-aminoacyl-tRNA entities in vivo. This is D-aminoacyl-tRNA deacylase from Methanothrix thermoacetophila (strain DSM 6194 / JCM 14653 / NBRC 101360 / PT) (Methanosaeta thermophila).